We begin with the raw amino-acid sequence, 237 residues long: Histone H1E (237 aa).

Residues methionine 1 to proline 21 show a composition bias toward low complexity. 2 disordered regions span residues methionine 1–glutamate 56 and leucine 109–lysine 237. A compositionally biased stretch (basic and acidic residues) spans glutamate 26 to proline 42. The region spanning threonine 50 to proline 124 is the H15 domain. The span at alanine 182–lysine 195 shows a compositional bias: low complexity. The span at proline 200–glutamate 209 shows a compositional bias: basic and acidic residues. Residues alanine 210–lysine 237 show a composition bias toward basic residues.

Belongs to the histone H1/H5 family.

It localises to the nucleus. The protein resides in the chromosome. Functionally, histones H1 are necessary for the condensation of nucleosome chains into higher-order structures. In Chironomus tentans (Midge), this protein is Histone H1E.